The sequence spans 277 residues: 2,5-diketo-D-gluconic acid reductase B (277 aa).

The active-site Proton donor is Tyr-51. Residue His-109 participates in substrate binding. Position 189–242 (189–242 (SPLARRSELLTEQLLQELAVVYGVTPTQVVLRWHVQLGSTPIPKSADPDRQREN)) interacts with NADP(+).

It belongs to the aldo/keto reductase family.

The protein localises to the cytoplasm. It catalyses the reaction 2-dehydro-D-gluconate + NADP(+) = 2,5-didehydro-D-gluconate + NADPH + H(+). Functionally, catalyzes the reduction of 2,5-diketo-D-gluconic acid (25DKG) to 2-keto-L-gulonic acid (2KLG). 25DKGR-B has higher catalytic efficiency than 25DKGR-A. This Corynebacterium sp. (strain SHS752001) protein is 2,5-diketo-D-gluconic acid reductase B (dkgB).